The primary structure comprises 191 residues: Peptidyl-tRNA hydrolase (191 aa).

TRNA is bound at residue Tyr-17. His-22 functions as the Proton acceptor in the catalytic mechanism. Positions 68, 70, and 116 each coordinate tRNA.

It belongs to the PTH family. As to quaternary structure, monomer.

It localises to the cytoplasm. It catalyses the reaction an N-acyl-L-alpha-aminoacyl-tRNA + H2O = an N-acyl-L-amino acid + a tRNA + H(+). In terms of biological role, hydrolyzes ribosome-free peptidyl-tRNAs (with 1 or more amino acids incorporated), which drop off the ribosome during protein synthesis, or as a result of ribosome stalling. Catalyzes the release of premature peptidyl moieties from peptidyl-tRNA molecules trapped in stalled 50S ribosomal subunits, and thus maintains levels of free tRNAs and 50S ribosomes. The chain is Peptidyl-tRNA hydrolase from Mycolicibacterium smegmatis (strain ATCC 700084 / mc(2)155) (Mycobacterium smegmatis).